Consider the following 250-residue polypeptide: 5-oxoprolinase subunit A (250 aa).

It belongs to the LamB/PxpA family. In terms of assembly, forms a complex composed of PxpA, PxpB and PxpC.

The enzyme catalyses 5-oxo-L-proline + ATP + 2 H2O = L-glutamate + ADP + phosphate + H(+). Functionally, catalyzes the cleavage of 5-oxoproline to form L-glutamate coupled to the hydrolysis of ATP to ADP and inorganic phosphate. The chain is 5-oxoprolinase subunit A from Staphylococcus aureus (strain NCTC 8325 / PS 47).